The chain runs to 330 residues: Ferredoxin--NADP reductase (330 aa).

Positions 35, 43, 48, 90, 123, 285, and 326 each coordinate FAD.

Belongs to the ferredoxin--NADP reductase type 2 family. As to quaternary structure, homodimer. Requires FAD as cofactor.

The catalysed reaction is 2 reduced [2Fe-2S]-[ferredoxin] + NADP(+) + H(+) = 2 oxidized [2Fe-2S]-[ferredoxin] + NADPH. This Streptococcus agalactiae serotype Ia (strain ATCC 27591 / A909 / CDC SS700) protein is Ferredoxin--NADP reductase.